The sequence spans 1499 residues: Pleiotropic ABC efflux transporter of multiple drugs CDR1 (1499 aa).

Residues 1 to 11 (MSLASDKKDAD) are compositionally biased toward basic and acidic residues. The tract at residues 1 to 29 (MSLASDKKDADVASTTTTAQDDDNLSTYH) is disordered. Residues Asn24, Asn96, and Asn99 are each glycosylated (N-linked (GlcNAc...) asparagine). Positions 146 to 399 (VYNTVVPSTA…FQKMGYVSPE (254 aa)) constitute an ABC transporter 1 domain. Ser307 bears the Phosphoserine mark. A glycan (N-linked (GlcNAc...) asparagine) is linked at Asn323. Ser484 carries the phosphoserine modification. A helical transmembrane segment spans residues 510-530 (GVTLFMVIGNSSMAFILGSMF). Residue Asn537 is glycosylated (N-linked (GlcNAc...) asparagine). The next 5 membrane-spanning stretches (helical) occupy residues 548 to 568 (AMFFAVLFNAFSSLLEIFSLF), 597 to 617 (VPAKLITAVCFNIIYYFLVNF), 622 to 642 (GVFFFYFLINIVAVFAMSHLF), 654 to 674 (AAMVPASMLLLGLSMYSGFAI), and 763 to 783 (GFGIGLAYVIFFLVLYLILCE). The N-linked (GlcNAc...) asparagine glycan is linked to Asn813. One can recognise an ABC transporter 2 domain in the interval 857-1099 (FHWRNLCYDV…TMIDYFESHG (243 aa)). Position 893-900 (893-900 (GASGAGKT)) interacts with ATP. The N-linked (GlcNAc...) asparagine glycan is linked to Asn1159. 3 consecutive transmembrane segments (helical) span residues 1193-1213 (YLWSKFFLTIFNNIFIGFTFF), 1228-1248 (AVFMFTVIFNPLLQQYLPSFV), and 1278-1298 (IPWNILAGTVAFVIYYYAIGF). N-linked (GlcNAc...) asparagine glycosylation occurs at Asn1301. The next 2 helical transmembrane spans lie at 1314-1334 (LFWLFSCAFYVYIGSLALFCI) and 1342-1362 (AAANMASLMFTLSLSFCGVLV). A glycan (N-linked (GlcNAc...) asparagine) is linked at Asn1412. A helical transmembrane segment spans residues 1466-1486 (WGIFICYIAFNYIAGIFLYWL).

This sequence belongs to the ABC transporter superfamily. In terms of processing, phosphorylated at Ser-307 and Ser-484. Ser-307 and Ser-484 are dephosphorylated on glucose depletion and independently rephosphorylated during glucose exposure or under stress.

It localises to the cell membrane. With respect to regulation, inhibited by clorgyline. Inhibited by RC21v3, a 4-methoxy-2,3,6-trimethylbenzenesulphonyl derivative of the D-octapeptide D-FFKWQRRR, via the interaction with the ectodomain. FK506, enniatin, milbemycin alpha-11, and milbemycin beta-9 also inhibit CDR1 activity. Inhibited by milbemycin A3/A4 oxim derivatives. Functionally, pleiotropic ABC efflux transporter that transports and confers resistance to structurally and functionally unrelated compounds including rhodamine 6G, Nile red, caspofungin, cycloheximide, or azoles such as fluconazole, itraconazole, ketoconazole, posaconazole, voriconazole, and isavuconazole. Chlorbromuron, itraconazole, yohimbine, ketoconazole, miconazole, clotrimazole, DE-11, tamoxifen, quinidine, verapamil can compete for rhodamine 6G's binding site(s) while compounds such as propanil, chloramphenicol, benomyl, voriconazole, tritylimidazole, ketoconazole, miconazole, tamoxifen, gefitinib shared binding site(s) with fluconazole. Nile red mediated efflux appears to be relatively more specific since only five compounds such as ZW3-12, rhodamine 123, miconazole, clotrimazole, and itraconazole can inhibit its accumulation. Does not use as substrates 4-nitroquinoline 1-oxide (4-NQO) and disulfiram. Does not play a role in the azole resistance in mature biofilms. The chain is Pleiotropic ABC efflux transporter of multiple drugs CDR1 from Candida glabrata (strain ATCC 2001 / BCRC 20586 / JCM 3761 / NBRC 0622 / NRRL Y-65 / CBS 138) (Yeast).